The following is a 163-amino-acid chain: ADP-ribosylation factor-like protein 2-binding protein (163 aa).

It belongs to the ARL2BP family. Interacts with GTP bound ARL2 and ARL3; the complex ARL2-ARL2BP as well as ARL2BP alone, binds to SLC25A4/ANT1. Interaction with ARL2 may be required for cilia basal body localization. Interacts with STAT3; interaction is enhanced with ARL2. Found in a complex with ARL2BP, ARL2 and SLC25A6. Found in a complex with ARL2, ARL2BP and SLC25A4. Interacts with STAT2, STAT3 and STAT4. Ubiquitous with higher expression in brain, especially in hippocampus and cortex. Also expressed in lung, cerebellum, liver, kidney, spleen and heart (at protein level).

Its subcellular location is the cytoplasm. It is found in the mitochondrion intermembrane space. The protein resides in the cytoskeleton. It localises to the microtubule organizing center. The protein localises to the centrosome. Its subcellular location is the nucleus. It is found in the spindle. The protein resides in the cilium basal body. Functionally, together with ARL2, plays a role in the nuclear translocation, retention and transcriptional activity of STAT3. May play a role as an effector of ARL2. The chain is ADP-ribosylation factor-like protein 2-binding protein (Arl2bp) from Rattus norvegicus (Rat).